The chain runs to 349 residues: Dihydroorotate dehydrogenase (quinone) (349 aa).

Residues 67–71 and Thr-91 contribute to the FMN site; that span reads AGLDK. Residue Lys-71 coordinates substrate. A substrate-binding site is contributed by 116–120; that stretch reads NRLGF. 2 residues coordinate FMN: Asn-147 and Asn-180. Asn-180 provides a ligand contact to substrate. Ser-183 acts as the Nucleophile in catalysis. Substrate is bound at residue Asn-185. FMN-binding residues include Lys-225 and Thr-253. A substrate-binding site is contributed by 254–255; that stretch reads NT. FMN-binding positions include Gly-276, Gly-305, and 326–327; that span reads YT.

The protein belongs to the dihydroorotate dehydrogenase family. Type 2 subfamily. Monomer. It depends on FMN as a cofactor.

It is found in the cell membrane. It carries out the reaction (S)-dihydroorotate + a quinone = orotate + a quinol. It participates in pyrimidine metabolism; UMP biosynthesis via de novo pathway; orotate from (S)-dihydroorotate (quinone route): step 1/1. Catalyzes the conversion of dihydroorotate to orotate with quinone as electron acceptor. The protein is Dihydroorotate dehydrogenase (quinone) of Bordetella avium (strain 197N).